The sequence spans 896 residues: Protein argonaute 9 (896 aa).

Positions 267 to 380 (PVVDFLLANQ…FPIEFCNLVS (114 aa)) constitute a PAZ domain. Residues 550 to 857 (FLLCILAERK…AAAQMGTVMK (308 aa)) form the Piwi domain.

The protein belongs to the argonaute family. Ago subfamily. In terms of tissue distribution, expressed in embryonic shoot apex region, pollen and developing ovules.

Functionally, involved in RNA-mediated post-transcriptional gene silencing (PTGS). Main component of the RNA-induced silencing complex (RISC) that binds to a short guide RNA such as a microRNA (miRNA) or small interfering RNA (siRNA). RISC uses the mature miRNA or siRNA as a guide for slicer-directed cleavage of homologous mRNAs to repress gene expression. Associates preferentially with small RNAs of 24 nucleotide in length with a 5' terminal adenosine. Interacts with 24 nucleotide sRNAs derived from transposable elements (TEs). Required to silence pericentrometric-located TEs in female gametes and their accessory cells. Necessary to inactivate a significant proportion of long terminal repeat retrotransposons (LTRs) in the ovule. Required to specify cell fate in ovule. Involved in the control of female gamete formation by restricting the specification of gametophyte precursors in a dosage-dependent, non-cell-autonomous manner. Targeted by turnip yellows virus (TuYV) protein P0 (via F-box-like domain) for probable proteasome degradation and thereby inactivating AGO9 function in RNA silencing. This Arabidopsis thaliana (Mouse-ear cress) protein is Protein argonaute 9 (AGO9).